The primary structure comprises 581 residues: Colicin-E2 (581 aa).

Disordered stretches follow at residues 1–74 (MSGG…SGGG), 242–269 (QTLS…NTRD), 293–320 (PDQV…EAAE), 421–488 (ADAA…IADK), and 513–566 (DLSK…MNNI). The segment covering 20–35 (INGGPTGLGVGGGASD) has biased composition (gly residues). Over residues 36-45 (GSGWSSENNP) the composition is skewed to low complexity. A compositionally biased stretch (gly residues) spans 46 to 74 (WGGGSGSGIHWGGGSGHGNGGGNGNSGGG). A compositionally biased stretch (polar residues) spans 242 to 251 (QTLSPGVTNN). 3 stretches are compositionally biased toward basic and acidic residues: residues 296–320 (VKQR…EAAE), 429–452 (QERR…ESKR), and 464–475 (PVGDKWLDDAGK). Over residues 518–527 (FKGSNKTNIQ) the composition is skewed to polar residues. Residues 535–554 (RKKDQVGGRERFELHHDKPI) show a composition bias toward basic and acidic residues. His549, His574, and His578 together coordinate Zn(2+).

The protein belongs to the colicin/pyosin nuclease family.

Functionally, this plasmid-coded bactericidal protein is an endonuclease active on both single- and double-stranded DNA but with undefined specificity. Colicins are polypeptide toxins produced by and active against E.coli and closely related bacteria. The polypeptide is Colicin-E2 (col) (Escherichia coli).